Consider the following 95-residue polypeptide: Co-chaperonin GroES (95 aa).

It belongs to the GroES chaperonin family. As to quaternary structure, heptamer of 7 subunits arranged in a ring. Interacts with the chaperonin GroEL.

The protein resides in the cytoplasm. In terms of biological role, together with the chaperonin GroEL, plays an essential role in assisting protein folding. The GroEL-GroES system forms a nano-cage that allows encapsulation of the non-native substrate proteins and provides a physical environment optimized to promote and accelerate protein folding. GroES binds to the apical surface of the GroEL ring, thereby capping the opening of the GroEL channel. This chain is Co-chaperonin GroES, found in Deinococcus radiodurans (strain ATCC 13939 / DSM 20539 / JCM 16871 / CCUG 27074 / LMG 4051 / NBRC 15346 / NCIMB 9279 / VKM B-1422 / R1).